A 470-amino-acid chain; its full sequence is MSSGRIVQIIGAVIDVEFPRDSVPAVYDALKVESKGLTLEVQQQLGDGIVRCIAMGSSEGLSRNLEVTGTGAPVSVPVGNETLGRIMDVLGNPIDECGPIGEQERMPIHRKAPAYDELSSTTDLLETGVKVIDLVCPFAKGGKVGLFGGAGVGKTVNMMELINNIALEHSGLSVFAGVGERTREGNDFYHEMQESGVVNVENFKESKVAMVYGQMNEPPGNRLRVALTGLTMAEKFRDEGRDVLLFIDNIYRYTLAGTEVSALLGRMPSAVGYQPTLAEEMGVLQERITSTKTGSITSVQAVYVPADDLTDPSPATTFAHLDSTVVLSRDIAAKGIYPAIDPLDSTSRQLDPLVIGAEHYDVARGVQSVLQRYKELKDIIAILGMDELSEEDKQTVNRARKIERFLSQPFHVAEVFTGAPGKYVPLKDTIAGFKGLLAGDFDHLPEQAFYMVGTIDEAVEKAAKIAGKAA.

Position 148–155 (148–155 (GGAGVGKT)) interacts with ATP.

The protein belongs to the ATPase alpha/beta chains family. F-type ATPases have 2 components, CF(1) - the catalytic core - and CF(0) - the membrane proton channel. CF(1) has five subunits: alpha(3), beta(3), gamma(1), delta(1), epsilon(1). CF(0) has three main subunits: a(1), b(2) and c(9-12). The alpha and beta chains form an alternating ring which encloses part of the gamma chain. CF(1) is attached to CF(0) by a central stalk formed by the gamma and epsilon chains, while a peripheral stalk is formed by the delta and b chains.

Its subcellular location is the cell inner membrane. It carries out the reaction ATP + H2O + 4 H(+)(in) = ADP + phosphate + 5 H(+)(out). In terms of biological role, produces ATP from ADP in the presence of a proton gradient across the membrane. The catalytic sites are hosted primarily by the beta subunits. The chain is ATP synthase subunit beta from Teredinibacter turnerae (strain ATCC 39867 / T7901).